Here is a 369-residue protein sequence, read N- to C-terminus: Peridinin-chlorophyll a-binding protein 2, chloroplastic (369 aa).

Residues Met-1–Ala-56 constitute a chloroplast transit peptide. Repeat copies occupy residues Asp-57–Gly-219 and Asp-220–Arg-369.

Homotrimer.

The protein localises to the plastid. Its subcellular location is the chloroplast. Its function is as follows. Water-soluble antenna for capture of solar energy in the blue-green range. Peridinin is an asymmetric carotenoid. The chain is Peridinin-chlorophyll a-binding protein 2, chloroplastic from Amphidinium carterae (Dinoflagellate).